A 130-amino-acid polypeptide reads, in one-letter code: Small ribosomal subunit protein uS9 (130 aa).

It belongs to the universal ribosomal protein uS9 family.

This is Small ribosomal subunit protein uS9 from Syntrophobacter fumaroxidans (strain DSM 10017 / MPOB).